The chain runs to 354 residues: Ornithine carbamoyltransferase, catabolic (354 aa).

Carbamoyl phosphate-binding positions include 67-70, Gln-94, Arg-118, and 145-148; these read STRT and HPTQ. Residues Asn-177, Asp-241, and 245–246 contribute to the L-ornithine site; that span reads SM. Carbamoyl phosphate-binding positions include 284-285 and Arg-329; that span reads CL.

Belongs to the aspartate/ornithine carbamoyltransferase superfamily. OTCase family.

It localises to the cytoplasm. The enzyme catalyses carbamoyl phosphate + L-ornithine = L-citrulline + phosphate + H(+). It participates in amino-acid degradation; L-arginine degradation via ADI pathway; carbamoyl phosphate from L-arginine: step 2/2. Reversibly catalyzes the transfer of the carbamoyl group from carbamoyl phosphate (CP) to the N(epsilon) atom of ornithine (ORN) to produce L-citrulline. The chain is Ornithine carbamoyltransferase, catabolic (arcB) from Lactococcus lactis subsp. lactis (strain IL1403) (Streptococcus lactis).